A 365-amino-acid chain; its full sequence is tRNA N6-adenosine threonylcarbamoyltransferase (365 aa).

Positions 119 and 123 each coordinate Fe cation. Substrate contacts are provided by residues 141–145 (LVSGG), Asp-174, Gly-187, and Asn-288. Position 316 (Asp-316) interacts with Fe cation.

It belongs to the KAE1 / TsaD family. It depends on Fe(2+) as a cofactor.

The protein localises to the cytoplasm. The enzyme catalyses L-threonylcarbamoyladenylate + adenosine(37) in tRNA = N(6)-L-threonylcarbamoyladenosine(37) in tRNA + AMP + H(+). Required for the formation of a threonylcarbamoyl group on adenosine at position 37 (t(6)A37) in tRNAs that read codons beginning with adenine. Is involved in the transfer of the threonylcarbamoyl moiety of threonylcarbamoyl-AMP (TC-AMP) to the N6 group of A37, together with TsaE and TsaB. TsaD likely plays a direct catalytic role in this reaction. The sequence is that of tRNA N6-adenosine threonylcarbamoyltransferase from Rhizobium etli (strain ATCC 51251 / DSM 11541 / JCM 21823 / NBRC 15573 / CFN 42).